Consider the following 126-residue polypeptide: RuBisCO chaperone RbcX (126 aa).

It belongs to the RbcX family. As to quaternary structure, homodimer. Interacts with the exposed C-terminal peptide of RbcL via its central cleft, contacts a second RbcL monomer via its peripheral polar surface.

It is found in the carboxysome. The protein resides in the cytoplasm. An RbcL-specific chaperone. Required for assembly of the RbcL8 core. The central cleft of the RbcX homodimer (RbcX2) binds the C-terminus of a RbcL monomer, stabilizing the C-terminus and probably preventing its reassociation with chaperonin GroEL-ES. At the same time the peripheral region of RbcX2 binds a second RbcL monomer, bridging the RbcL homodimers in the correct orientation. The RbcX2(2)-bound RbcL dimers then assemble into the RbcL8 core (RbcL8-(RbcX2)8). RbcS binding triggers the release of RbcX2. The chain is RuBisCO chaperone RbcX from Thermosynechococcus vestitus (strain NIES-2133 / IAM M-273 / BP-1).